A 173-amino-acid polypeptide reads, in one-letter code: Shikimate kinase 1 (173 aa).

14 to 19 (GAGKST) lines the ATP pocket. S18 contacts Mg(2+). D36, R60, and G82 together coordinate substrate. R120 is a binding site for ATP. Residue R140 coordinates substrate. Q157 contributes to the ATP binding site.

It belongs to the shikimate kinase family. As to quaternary structure, monomer. Mg(2+) serves as cofactor.

The protein resides in the cytoplasm. It carries out the reaction shikimate + ATP = 3-phosphoshikimate + ADP + H(+). Its pathway is metabolic intermediate biosynthesis; chorismate biosynthesis; chorismate from D-erythrose 4-phosphate and phosphoenolpyruvate: step 5/7. In terms of biological role, catalyzes the specific phosphorylation of the 3-hydroxyl group of shikimic acid using ATP as a cosubstrate. This Salmonella typhimurium (strain LT2 / SGSC1412 / ATCC 700720) protein is Shikimate kinase 1.